The following is a 163-amino-acid chain: Carbon monoxide dehydrogenase small chain (163 aa).

The 77-residue stretch at 4-80 folds into the 2Fe-2S ferredoxin-type domain; it reads KIITVNVNGK…GSEVLTVEGL (77 aa). [2Fe-2S] cluster contacts are provided by cysteine 42, cysteine 47, cysteine 50, cysteine 62, cysteine 101, cysteine 104, cysteine 136, and cysteine 138.

As to quaternary structure, dimer of heterotrimers. Each heterotrimer consists of a large, a medium and a small subunit. [2Fe-2S] cluster serves as cofactor.

The catalysed reaction is CO + a quinone + H2O = a quinol + CO2. In terms of biological role, catalyzes the oxidation of carbon monoxide to carbon dioxide. The chain is Carbon monoxide dehydrogenase small chain (cutS) from Hydrogenophaga pseudoflava (Pseudomonas carboxydoflava).